A 176-amino-acid polypeptide reads, in one-letter code: Large ribosomal subunit protein uL16 (176 aa).

Belongs to the universal ribosomal protein uL16 family.

The sequence is that of Large ribosomal subunit protein uL16 from Halobacterium salinarum (strain ATCC 29341 / DSM 671 / R1).